Consider the following 510-residue polypeptide: ATP synthase subunit alpha, chloroplastic (510 aa).

An ATP-binding site is contributed by 170–177 (GDRQTGKT).

This sequence belongs to the ATPase alpha/beta chains family. In terms of assembly, F-type ATPases have 2 components, CF(1) - the catalytic core - and CF(0) - the membrane proton channel. CF(1) has five subunits: alpha(3), beta(3), gamma(1), delta(1), epsilon(1). CF(0) has four main subunits: a, b, b' and c.

It is found in the plastid. Its subcellular location is the chloroplast thylakoid membrane. It catalyses the reaction ATP + H2O + 4 H(+)(in) = ADP + phosphate + 5 H(+)(out). In terms of biological role, produces ATP from ADP in the presence of a proton gradient across the membrane. The alpha chain is a regulatory subunit. The sequence is that of ATP synthase subunit alpha, chloroplastic from Phaseolus vulgaris (Kidney bean).